The primary structure comprises 86 residues: Large ribosomal subunit protein uL23 (86 aa).

Belongs to the universal ribosomal protein uL23 family. As to quaternary structure, part of the 50S ribosomal subunit. Contacts protein L29.

Functionally, binds to 23S rRNA. One of the proteins that surrounds the polypeptide exit tunnel on the outside of the ribosome. In Methanococcus maripaludis (strain C7 / ATCC BAA-1331), this protein is Large ribosomal subunit protein uL23.